The sequence spans 642 residues: MSTGAQSKAAVAGQHADGPRLLADVGGTNARFALETGPGDITQIRVYPGADYPTLTDAIRKYLKDVKITRVNHAAIAIANPVDGDQVTMTNHDWSFSIEATRRALGFDTLLVVNDFTALAMALPGLTDAQRVQIGGGARRQNSVIGLLGPGTGLGVSGLIPADDRWIALGSEGGHASFAPQDEREDLVLQYARKKFPHVSFERVCAGPGMEIIYRALAARDKKRVAATVDTVEIVERAHAGDALALETVECFCGILGAFAGSVALTLGALGGVYIGGGVALKLGELFTRSSFRARFEAKGRFTHYLENIPTYLITAEYPAFLGVSAILAEQLSNRSGGASSAVFERIRQMRDALTPAERRVADLALNHPRSIINDPIVDIARKADVSQPTVIRFCRSLGCQGLSDFKLKLATGLTGTIPMSHSQVHLGDTATDFGAKVLDNTVSAILQLREHLNFEHVENAIEILNGARRIEFYGLGNSNIVAQDAHYKFFRFGIPTIAYGDLYMQAASAALLGKGDVIVAVSKSGRAPELLRVLDVAMQAGAKVIAITSSNTPLAKRATVALETDHIEMRESQLSMISRILHLLMIDILAVGVAIRRASTNGELPEAVAQAKARASDDETADVLDWLSHGASPAAKDVARD.

The tract at residues 1-340 (MSTGAQSKAA…QLSNRSGGAS (340 aa)) is glucokinase. 23–28 (ADVGGT) provides a ligand contact to ATP. The HTH rpiR-type domain occupies 341 to 417 (SAVFERIRQM…LKLATGLTGT (77 aa)). Residues 341–642 (SAVFERIRQM…SPAAKDVARD (302 aa)) are putative HTH-type transcriptional regulator. A DNA-binding region (H-T-H motif) is located at residues 377–396 (IVDIARKADVSQPTVIRFCR). One can recognise an SIS domain in the interval 461–600 (AIEILNGARR…AVGVAIRRAS (140 aa)). A helical transmembrane segment spans residues 576-596 (SMISRILHLLMIDILAVGVAI).

It in the N-terminal section; belongs to the bacterial glucokinase family.

Its subcellular location is the membrane. It catalyses the reaction D-glucose + ATP = D-glucose 6-phosphate + ADP + H(+). The chain is Bifunctional protein glk (glk) from Burkholderia lata (strain ATCC 17760 / DSM 23089 / LMG 22485 / NCIMB 9086 / R18194 / 383).